Reading from the N-terminus, the 5088-residue chain is Replicase polyprotein 1ab (5088 aa).

Residues 26-46 (VTNVIQYWTPILTMLLLAIYI) traverse the membrane as a helical segment. The disordered stretch occupies residues 301–323 (EIEDDTEAEETQKTKRKGKLQPQ). 5 helical membrane-spanning segments follow: residues 343-363 (HLTFGPAYMTMLCLISIMSPT), 1132-1152 (GLFLMLYIAALIIILAIAITI), 1156-1176 (TMMMFLKLITIFAYTFGHLLL), 1201-1221 (YGCLLMLGALAIAVIDLLAYI), and 1250-1270 (ILIPYIFTSYGLVLTIIVSYV). Active-site for 3C-like proteinase residues include His-1434 and Cys-1539. A run of 2 helical transmembrane segments spans residues 1729–1749 (FTHTHPAFYIAAACVFGLFFV) and 1758–1778 (ILSSIIFAIPHIYVNYYYGLV). Residues 3093–3112 (KPNCPMVPSEVPVRNKHKSA) are disordered. Residues 4351–4616 (MNIVMDDCIC…MTQCIYQSFV (266 aa)) enclose the ExoN domain. Residues Asp-4362, Glu-4364, and Asp-4481 contribute to the active site. Cys-4498, Cys-4504, Cys-4522, and His-4525 together coordinate Zn(2+). Catalysis depends on residues His-4599, Asp-4604, Lys-4880, Asp-4969, Lys-4998, and Glu-5035. The Nidovirus-type SAM-dependent 2'-O-MTase domain maps to 4844-5088 (LNNHAALAKA…RQSVFRYSPK (245 aa)).

Homodimer. In terms of processing, specific enzymatic cleavages in vivo by its own protease yield mature proteins. 3CL-PRO is autocatalytically processed.

The protein resides in the membrane. It carries out the reaction a 5'-end (5'-triphosphoguanosine)-ribonucleoside in mRNA + S-adenosyl-L-methionine = a 5'-end (N(7)-methyl 5'-triphosphoguanosine)-ribonucleoside in mRNA + S-adenosyl-L-homocysteine. The catalysed reaction is RNA(n) + a ribonucleoside 5'-triphosphate = RNA(n+1) + diphosphate. The enzyme catalyses ATP + H2O = ADP + phosphate + H(+). It catalyses the reaction a 5'-end (N(7)-methyl 5'-triphosphoguanosine)-ribonucleoside in mRNA + S-adenosyl-L-methionine = a 5'-end (N(7)-methyl 5'-triphosphoguanosine)-(2'-O-methyl-ribonucleoside) in mRNA + S-adenosyl-L-homocysteine + H(+). Cysteine protease responsible for the majority of cleavages of the polyprotein. Recognizes substrates containing the core sequence [NT]-[EHKQSY]-|-[AGNST]. Functionally, the helicase which contains a zinc finger structure displays RNA and DNA duplex-unwinding activities with 5' to 3' polarity. In terms of biological role, RNA-directed RNA polymerase that catalyzes the transcription of viral genomic and subgenomic RNAs. Its function is as follows. Catalyzes the RNA N7-guanylyltransferase reaction to methylate the core cap structure GpppN-RNA into the type-0 cap (m)GpppN-RNA. This is Replicase polyprotein 1ab from Ochlerotatus harrisoni (CAVV).